A 533-amino-acid polypeptide reads, in one-letter code: Hydroxylamine reductase (533 aa).

Residues Cys-3, Cys-6, Cys-15, and Cys-21 each coordinate [4Fe-4S] cluster. Hybrid [4Fe-2O-2S] cluster is bound by residues His-234, Glu-258, Cys-302, Cys-389, Cys-417, Cys-442, Glu-476, and Lys-478. Cys-389 bears the Cysteine persulfide mark.

This sequence belongs to the HCP family. Requires [4Fe-4S] cluster as cofactor. It depends on hybrid [4Fe-2O-2S] cluster as a cofactor.

It localises to the cytoplasm. The enzyme catalyses A + NH4(+) + H2O = hydroxylamine + AH2 + H(+). Functionally, catalyzes the reduction of hydroxylamine to form NH(3) and H(2)O. The polypeptide is Hydroxylamine reductase (Maridesulfovibrio salexigens (strain ATCC 14822 / DSM 2638 / NCIMB 8403 / VKM B-1763) (Desulfovibrio salexigens)).